The sequence spans 234 residues: Glutathione S-transferase U16 (234 aa).

Positions 5–85 (EEVKLLGVWY…YIDETWNSSA (81 aa)) constitute a GST N-terminal domain. Residues 15–16 (SP), 42–43 (SK), 56–57 (KV), and 69–70 (ES) contribute to the glutathione site. One can recognise a GST C-terminal domain in the interval 92–219 (HPYDRALARF…APEIEKVAEF (128 aa)).

This sequence belongs to the GST superfamily. Tau family.

Its subcellular location is the cytoplasm. It localises to the cytosol. The catalysed reaction is RX + glutathione = an S-substituted glutathione + a halide anion + H(+). In terms of biological role, may be involved in the conjugation of reduced glutathione to a wide number of exogenous and endogenous hydrophobic electrophiles and have a detoxification role against certain herbicides. This chain is Glutathione S-transferase U16 (GSTU16), found in Arabidopsis thaliana (Mouse-ear cress).